A 235-amino-acid chain; its full sequence is Segregation and condensation protein A (235 aa).

This sequence belongs to the ScpA family. Component of a cohesin-like complex composed of ScpA, ScpB and the Smc homodimer, in which ScpA and ScpB bind to the head domain of Smc. The presence of the three proteins is required for the association of the complex with DNA.

The protein resides in the cytoplasm. Functionally, participates in chromosomal partition during cell division. May act via the formation of a condensin-like complex containing Smc and ScpB that pull DNA away from mid-cell into both cell halves. The sequence is that of Segregation and condensation protein A from Streptococcus agalactiae serotype Ia (strain ATCC 27591 / A909 / CDC SS700).